A 172-amino-acid polypeptide reads, in one-letter code: Large ribosomal subunit protein uL10 (172 aa).

This sequence belongs to the universal ribosomal protein uL10 family. In terms of assembly, part of the ribosomal stalk of the 50S ribosomal subunit. The N-terminus interacts with L11 and the large rRNA to form the base of the stalk. The C-terminus forms an elongated spine to which L12 dimers bind in a sequential fashion forming a multimeric L10(L12)X complex.

Its function is as follows. Forms part of the ribosomal stalk, playing a central role in the interaction of the ribosome with GTP-bound translation factors. The sequence is that of Large ribosomal subunit protein uL10 from Xanthobacter autotrophicus (strain ATCC BAA-1158 / Py2).